Here is a 254-residue protein sequence, read N- to C-terminus: 5-oxoprolinase subunit A (254 aa).

This sequence belongs to the LamB/PxpA family. In terms of assembly, forms a complex composed of PxpA, PxpB and PxpC.

The enzyme catalyses 5-oxo-L-proline + ATP + 2 H2O = L-glutamate + ADP + phosphate + H(+). Its function is as follows. Catalyzes the cleavage of 5-oxoproline to form L-glutamate coupled to the hydrolysis of ATP to ADP and inorganic phosphate. This is 5-oxoprolinase subunit A from Acinetobacter baumannii (strain AB307-0294).